A 595-amino-acid chain; its full sequence is Aspartate--tRNA ligase (595 aa).

L-aspartate is bound at residue glutamate 180. The tract at residues 204 to 207 (QLFK) is aspartate. Arginine 226 serves as a coordination point for L-aspartate. Residues 226–228 (RDE) and glutamine 235 each bind ATP. Histidine 454 provides a ligand contact to L-aspartate. Glutamate 488 contributes to the ATP binding site. Arginine 495 is a binding site for L-aspartate. Residue 540 to 543 (GLDR) coordinates ATP.

This sequence belongs to the class-II aminoacyl-tRNA synthetase family. Type 1 subfamily. As to quaternary structure, homodimer.

The protein localises to the cytoplasm. It carries out the reaction tRNA(Asp) + L-aspartate + ATP = L-aspartyl-tRNA(Asp) + AMP + diphosphate. Catalyzes the attachment of L-aspartate to tRNA(Asp) in a two-step reaction: L-aspartate is first activated by ATP to form Asp-AMP and then transferred to the acceptor end of tRNA(Asp). The protein is Aspartate--tRNA ligase of Clostridium acetobutylicum (strain ATCC 824 / DSM 792 / JCM 1419 / IAM 19013 / LMG 5710 / NBRC 13948 / NRRL B-527 / VKM B-1787 / 2291 / W).